A 3177-amino-acid polypeptide reads, in one-letter code: Proliferation marker protein Ki-67 (3177 aa).

The FHA domain maps to C27–I76. 2 stretches are compositionally biased toward basic and acidic residues: residues E98–K107 and L116–R126. 2 disordered regions span residues E98–S442 and R473–S572. A phosphoserine mark is found at S125, S128, and S162. Polar residues-rich tracts occupy residues S165–S177 and S202–S221. Basic and acidic residues predominate over residues M235–E263. K236 is covalently cross-linked (Glycyl lysine isopeptide (Lys-Gly) (interchain with G-Cter in SUMO2)). 5 positions are modified to phosphoserine: S250, S276, S277, S286, and S287. The span at S276 to S286 shows a compositional bias: polar residues. Residues T307 and T316 each carry the phosphothreonine modification. Phosphoserine is present on residues S321, S337, S373, S498, S503, and S588. The positively charged patch (CP) stretch occupies residues K455–K618. The PP1-binding domain occupies K462–T509. Residues T614 to N652 form a disordered region. Residues V616–T634 show a composition bias toward basic residues. Residues K636–N652 are compositionally biased toward polar residues. Position 701 is a phosphothreonine (T701). Disordered regions lie at residues L793–R815, V835–Q901, and K956–I989. The segment covering D855–A864 has biased composition (polar residues). Basic and acidic residues-rich tracts occupy residues R867–S882 and L975–I989. 16 K167R repeats span residues T994–P1101, K1108–P1216, S1228–P1336, S1348–P1450, K1461–P1569, T1582–T1684, K1696–P1806, E1817–P1925, S1937–P2046, V2059–P2163, S2175–P2284, S2296–T2405, A2419–P2526, K2537–E2639, K2643–T2748, and T2762–I2870. Glycyl lysine isopeptide (Lys-Gly) (interchain with G-Cter in SUMO2) cross-links involve residues K1013 and K1026. S1062 is subject to Phosphoserine. Residue K1082 forms a Glycyl lysine isopeptide (Lys-Gly) (interchain with G-Cter in SUMO1); alternate linkage. K1082 is covalently cross-linked (Glycyl lysine isopeptide (Lys-Gly) (interchain with G-Cter in SUMO2); alternate). Disordered stretches follow at residues K1109–Q1321 and Q1334–C1410. Phosphoserine is present on S1114. A compositionally biased stretch (polar residues) spans S1114 to K1127. Residue T1122 is modified to Phosphothreonine. S1125 bears the Phosphoserine mark. T1150 bears the Phosphothreonine mark. The residue at position 1152 (S1152) is a Phosphoserine. Phosphothreonine is present on residues T1159 and T1175. Position 1189 is a phosphoserine (S1189). A Phosphothreonine modification is found at T1215. At S1235 the chain carries Phosphoserine. A phosphothreonine mark is found at T1243, T1279, T1295, T1307, and T1315. Over residues G1308–K1317 the composition is skewed to basic residues. A Glycyl lysine isopeptide (Lys-Gly) (interchain with G-Cter in SUMO2) cross-link involves residue K1317. Phosphothreonine is present on T1335. Over residues L1353–K1368 the composition is skewed to polar residues. S1356 is subject to Phosphoserine. Residue T1363 is modified to Phosphothreonine. Position 1366 is a phosphoserine (S1366). The segment covering S1371 to P1384 has biased composition (basic and acidic residues). Phosphothreonine is present on residues T1400 and T1416. Position 1469 is a phosphoserine (S1469). Residue T1477 is modified to Phosphothreonine. At S1480 the chain carries Phosphoserine. The residue at position 1513 (T1513) is a Phosphothreonine. The segment at R1526–K1550 is disordered. S1542 and S1587 each carry phosphoserine. N6-acetyllysine is present on K1609. K1668 participates in a covalent cross-link: Glycyl lysine isopeptide (Lys-Gly) (interchain with G-Cter in SUMO2). Residues T1684 and T1712 each carry the phosphothreonine modification. Residue S1734 is modified to Phosphoserine. The disordered stretch occupies residues I1749 to F1797. Residues S1765–Q1782 show a composition bias toward polar residues. T1766 is modified (phosphothreonine). At S1779 the chain carries Phosphoserine. Phosphothreonine is present on T1805. S1825 is modified (phosphoserine). Residues T1859, T1868, T1884, and T1924 each carry the phosphothreonine modification. Residues P1925–L2033 are disordered. S1944 carries the phosphoserine modification. Residue K1966 is modified to N6-acetyllysine. Residues T1989, T2005, and T2025 each carry the phosphothreonine modification. Residue K2027 forms a Glycyl lysine isopeptide (Lys-Gly) (interchain with G-Cter in SUMO1); alternate linkage. A Glycyl lysine isopeptide (Lys-Gly) (interchain with G-Cter in SUMO2); alternate cross-link involves residue K2027. At T2045 the chain carries Phosphothreonine. The segment at A2047–E2112 is disordered. Residues L2063 to K2078 show a composition bias toward polar residues. A Phosphoserine modification is found at S2065. Phosphothreonine is present on T2073. S2076, S2095, and S2103 each carry phosphoserine. The segment covering V2088 to T2101 has biased composition (basic and acidic residues). A phosphothreonine mark is found at T2106 and T2122. Positions K2124 to Q2343 are disordered. The segment covering G2135–K2144 has biased composition (basic residues). Phosphothreonine is present on T2162. Residues L2180–K2195 are compositionally biased toward polar residues. S2182 is subject to Phosphoserine. T2190 carries the phosphothreonine modification. S2198 carries the phosphoserine modification. A Phosphothreonine modification is found at T2218. S2220 is modified (phosphoserine). Phosphothreonine is present on residues T2227, T2243, and T2283. At S2303 the chain carries Phosphoserine. 2 positions are modified to phosphothreonine: T2311 and T2348. Basic residues predominate over residues R2378 to S2390. The disordered stretch occupies residues R2378–K2447. 2 positions are modified to phosphoserine: S2390 and S2392. A Phosphothreonine modification is found at T2405. A phosphoserine mark is found at S2423 and S2425. K2451 participates in a covalent cross-link: Glycyl lysine isopeptide (Lys-Gly) (interchain with G-Cter in SUMO1). A phosphoserine mark is found at S2464, S2487, S2545, and S2592. Basic and acidic residues predominate over residues T2538–E2547. Disordered stretches follow at residues T2538–K2828 and H2879–T3160. Positions V2605–R2622 are enriched in polar residues. S2649 carries the post-translational modification Phosphoserine. 2 stretches are compositionally biased toward basic and acidic residues: residues G2673–V2697 and E2704–I2714. K2675 is covalently cross-linked (Glycyl lysine isopeptide (Lys-Gly) (interchain with G-Cter in SUMO1); alternate). K2675 is covalently cross-linked (Glycyl lysine isopeptide (Lys-Gly) (interchain with G-Cter in SUMO2); alternate). 2 stretches are compositionally biased toward polar residues: residues M2764–P2781 and I2883–P2892. Phosphoserine is present on residues S2768 and S2780. Residues A2907–A2923 show a composition bias toward basic and acidic residues. Residue K2909 forms a Glycyl lysine isopeptide (Lys-Gly) (interchain with G-Cter in SUMO2) linkage. Position 2928 is an N6-acetyllysine (K2928). Over residues E2959–R2971 the composition is skewed to basic and acidic residues. A2973–S2980 contacts ATP. The residue at position 2980 (S2980) is a Phosphoserine. Residues K3008–N3018 show a composition bias toward basic and acidic residues. T3021 is modified (phosphothreonine). Residues P3039–M3057 are compositionally biased toward basic and acidic residues. Over residues K3058 to Q3067 the composition is skewed to polar residues. S3061 carries the post-translational modification Phosphoserine. 2 stretches are compositionally biased toward basic and acidic residues: residues P3118–C3132 and V3140–T3160.

As to quaternary structure, interacts with KIF15. Interacts (via the FHA domain) with NIFK. Interacts with PPP1CC. Component of a complex at least composed of ZNF335, HCFC1, CCAR2, EMSY, MKI67, RBBP5, ASH2L and WDR5; the complex is formed as a result of interactions between components of a nuclear receptor-mediated transcription complex and a histone methylation complex. Interacts with ZNF335. In terms of processing, hyperphosphorylated by CDK1 in mitosis; hyperphosphorylatiom prevents undergoing liquid-liquid phase separation. Dephosphorylated by PPP1CC at the onset of anaphase. Dephosphorylation by protein phosphatase 2A (PP2A) and simultaneous exposure of the positively charged patch (CP) during mitotic exit induce the RNA-dependent formation of a liquid-like condensed phase on the chromosome surface. Ubiquitinated by the APC/C complex after neuronal progenitors exit mitosis during brain development, leading to clearance from constitutive heterochromatin. In terms of tissue distribution, mainly present in proliferating cells (at protein level).

It localises to the chromosome. The protein resides in the nucleus. The protein localises to the nucleolus. Functionally, protein that associates with the surface of mitotic chromosomes and acts both as a chromosome repellent during early mitosis and chromosome attractant during late mitosis. Required to maintain individual mitotic chromosomes dispersed in the cytoplasm following nuclear envelope disassembly. During early mitosis, relocalizes from nucleoli to the chromosome surface where it forms extended brush structures that cover a substantial fraction of the chromosome surface. The MKI67 brush structure prevents chromosomes from collapsing into a single chromatin mass by forming a steric and electrostatic charge barrier: the protein has a high net electrical charge and acts as a surfactant, dispersing chromosomes and enabling independent chromosome motility. During mitotic anaphase, the MKI67 brush structure collapses and MKI67 switches from a chromosome repellent to a chromosome attractant to promote chromosome clustering and facilitate the exclusion of large cytoplasmic particles from the future nuclear space. Mechanistically, dephosphorylation during mitotic exit and simultaneous exposure of a conserved basic patch induce the RNA-dependent formation of a liquid-like condensed phase on the chromosome surface, promoting coalescence of neighboring chromosome surfaces and clustering of chromosomes. Binds premature ribosomal RNAs during anaphase; promoting liquid-liquid phase separation. Binds DNA, with a preference for supercoiled DNA and AT-rich DNA. Does not contribute to the internal structure of mitotic chromosomes. May play a role in chromatin organization; it is however unclear whether it plays a direct role in chromatin organization or whether it is an indirect consequence of its function in mitotic chromosome. The polypeptide is Proliferation marker protein Ki-67 (Mus musculus (Mouse)).